Consider the following 297-residue polypeptide: MKTLVVALGGNALLQRGEALTAENQYRNIASAVPALARLARSYRLAIVHGNGPQVGLLALQNLAWKEVEPYPLDVLVAESQGMIGYMLAQSLSAQPQMPPVTTVLTRIEVSPDDPAFLQPEKFIGPVYQPEEQEALEAAYGWQMKRDGKYLRRVVASPQPRKILDSEAIELLLKEGHVVICSGGGGVPVTDDGAGSEAVIDKDLAAALLAEQINADGLVILTDADAVYENWGTPQQRAIRHATPDELAPFAKADGSMGPNVTAVSGYVRSRGKPAWIGALSRIEETLAGEAGTCISL.

The protein belongs to the carbamate kinase family.

It is found in the cytoplasm. The catalysed reaction is hydrogencarbonate + NH4(+) + ATP = carbamoyl phosphate + ADP + H2O + H(+). The enzyme catalyses carbamate + ATP = carbamoyl phosphate + ADP. It carries out the reaction hydrogencarbonate + NH4(+) = carbamate + H2O + H(+). The protein operates within nitrogen metabolism; (S)-allantoin degradation. Kinase involved in the anaerobic nitrogen utilization via the assimilation of allantoin. Catalyzes the transfer of a phosphate group from carbamoyl phosphate to ADP to produce ATP and leave carbamate, which spontaneously hydrolyzes to ammonia and hydrogencarbonate. This chain is Carbamate kinase, found in Escherichia coli (strain K12).